Reading from the N-terminus, the 483-residue chain is Pre-glycoprotein polyprotein GP complex (483 aa).

Gly-2 is lipidated: N-myristoyl glycine; by host. Residues 2–17 are Extracellular-facing; that stretch reads GQFISFMQEIPIFLQE. Residues 18–32 form a helical membrane-spanning segment; the sequence is ALNIALVAVSLICIV. Position 33 (Lys-33) is a topological domain, cytoplasmic. Residues 34 to 53 form a helical membrane-spanning segment; that stretch reads GLVNLYRCGLFQLMVFLVLA. 2 consecutive stretches face the extracellular side: residues 54 to 58 and 59 to 422; these read GRSCS and EETF…TLVD. Cys-57 contacts Zn(2+). Residues Asn-83 and Asn-95 are each glycosylated (N-linked (GlcNAc...) asparagine; by host). 6 cysteine pairs are disulfide-bonded: Cys-92–Cys-224, Cys-134–Cys-162, Cys-205–Cys-211, Cys-269–Cys-282, Cys-291–Cys-300, and Cys-354–Cys-375. Asn-164 and Asn-176 each carry an N-linked (GlcNAc...) asparagine; by host glycan. Residues Asn-355, Asn-363, Asn-380, and Asn-385 are each glycosylated (N-linked (GlcNAc...) asparagine; by host). A helical membrane pass occupies residues 423 to 443; the sequence is ICFWSTVFFTSTLFLHLIGFP. Residues 444-483 lie on the Cytoplasmic side of the membrane; sequence THEHIRGEGCPLPHRLNSMGGCRCGKYLPLKKPTIWHRRH. Positions 445, 447, 453, 457, 465, 467, and 483 each coordinate Zn(2+).

It belongs to the arenaviridae GPC protein family. As to quaternary structure, homotetramer; disulfide-linked. Homotetramer. GP2 homotetramers bind through ionic interactions with GP1 homotetramers to form the GP complex together with the stable signal peptide. The GP-C polyprotein interacts with the host protease MBTPS1/SKI-1 resulting in the polyprotein processing. In terms of processing, specific enzymatic cleavages in vivo yield mature proteins. GP-C polyprotein is cleaved in the endoplasmic reticulum by the host protease MBTPS1. Only cleaved glycoprotein is incorporated into virions. The SSP remains stably associated with the GP complex following cleavage by signal peptidase and plays crucial roles in the trafficking of GP through the secretory pathway. Post-translationally, myristoylation is necessary for GP2-mediated fusion activity.

The protein resides in the virion membrane. It is found in the host endoplasmic reticulum membrane. Its subcellular location is the host Golgi apparatus membrane. The protein localises to the host cell membrane. Functionally, class I viral fusion protein that directs fusion of viral and host endosomal membranes, leading to delivery of the nucleocapsid into the cytoplasm. Membrane fusion is mediated by irreversible conformational changes induced upon acidification in the endosome. Its function is as follows. Stable signal peptide (SSP): cleaved and functions as a signal peptide. In addition, it is also retained as the third component of the GP complex. The SSP is required for efficient glycoprotein expression, post-translational maturation cleavage of GP1 and GP2, glycoprotein transport to the cell surface plasma membrane, formation of infectious virus particles, and acid pH-dependent glycoprotein-mediated cell fusion. In terms of biological role, interacts with the host receptor. The sequence is that of Pre-glycoprotein polyprotein GP complex from Tacaribe virus (strain V5) (TCRV).